The sequence spans 344 residues: Phenylalanine--tRNA ligase alpha subunit (344 aa).

Mg(2+) is bound at residue Glu-256.

The protein belongs to the class-II aminoacyl-tRNA synthetase family. Phe-tRNA synthetase alpha subunit type 1 subfamily. As to quaternary structure, tetramer of two alpha and two beta subunits. Requires Mg(2+) as cofactor.

Its subcellular location is the cytoplasm. The enzyme catalyses tRNA(Phe) + L-phenylalanine + ATP = L-phenylalanyl-tRNA(Phe) + AMP + diphosphate + H(+). In Shouchella clausii (strain KSM-K16) (Alkalihalobacillus clausii), this protein is Phenylalanine--tRNA ligase alpha subunit.